Consider the following 375-residue polypeptide: Ribosomal RNA large subunit methyltransferase F (375 aa).

2 disordered regions span residues 1–39 (MKNN…AAVK) and 262–281 (NQRK…GKPT). Positions 27–38 (AKPKRVKKKAAV) are enriched in basic residues.

It belongs to the methyltransferase superfamily. METTL16/RlmF family.

It localises to the cytoplasm. It carries out the reaction adenosine(1618) in 23S rRNA + S-adenosyl-L-methionine = N(6)-methyladenosine(1618) in 23S rRNA + S-adenosyl-L-homocysteine + H(+). Functionally, specifically methylates the adenine in position 1618 of 23S rRNA. The protein is Ribosomal RNA large subunit methyltransferase F of Vibrio parahaemolyticus serotype O3:K6 (strain RIMD 2210633).